Consider the following 394-residue polypeptide: NAD(P)H-quinone oxidoreductase subunit H (394 aa).

It belongs to the complex I 49 kDa subunit family. As to quaternary structure, NDH-1 can be composed of about 15 different subunits; different subcomplexes with different compositions have been identified which probably have different functions.

It localises to the cellular thylakoid membrane. It catalyses the reaction a plastoquinone + NADH + (n+1) H(+)(in) = a plastoquinol + NAD(+) + n H(+)(out). The enzyme catalyses a plastoquinone + NADPH + (n+1) H(+)(in) = a plastoquinol + NADP(+) + n H(+)(out). NDH-1 shuttles electrons from an unknown electron donor, via FMN and iron-sulfur (Fe-S) centers, to quinones in the respiratory and/or the photosynthetic chain. The immediate electron acceptor for the enzyme in this species is believed to be plastoquinone. Couples the redox reaction to proton translocation, and thus conserves the redox energy in a proton gradient. Cyanobacterial NDH-1 also plays a role in inorganic carbon-concentration. This Synechococcus sp. (strain CC9605) protein is NAD(P)H-quinone oxidoreductase subunit H.